We begin with the raw amino-acid sequence, 139 residues long: Invertebrate-type lysozyme 3 (139 aa).

The signal sequence occupies residues 1 to 18; sequence MFVKSLVFLTIAVAYASA. The region spanning 19–138 is the I-type lysozyme domain; sequence DCLHCICMRE…WNGIKSCCGC (120 aa). 7 disulfides stabilise this stretch: Cys20–Cys106, Cys23–Cys138, Cys25–Cys31, Cys36–Cys45, Cys58–Cys86, Cys76–Cys82, and Cys98–Cys120. The active-site Proton donor is the Glu28. Asp39 (nucleophile) is an active-site residue. A substrate-binding site is contributed by 51 to 57; that stretch reads KLPYYED. Substrate is bound by residues Tyr90 and 113–115; that span reads HNG.

It belongs to the glycosyl hydrolase 22 family. Type-I lysozyme subfamily. Expressed in pharynx grinder muscle pm7, isthmus marginal cell mc2 and pharyngeal muscle cell pm5, intestinal cells and at lower levels in coelomocytes and epidermis. Expressed at low levels in intestine.

The protein resides in the late endosome lumen. It localises to the recycling endosome lumen. Its subcellular location is the lysosome lumen. The protein localises to the secreted. The catalysed reaction is Hydrolysis of (1-&gt;4)-beta-linkages between N-acetylmuramic acid and N-acetyl-D-glucosamine residues in a peptidoglycan and between N-acetyl-D-glucosamine residues in chitodextrins.. Its function is as follows. Has bacteriolytic activity against Gram-positive bacteria. Plays a role in defense against bacterial pathogens. Involved in pharyngeal grinder function by enabling proper lysis of ingested bacteria. This Caenorhabditis elegans protein is Invertebrate-type lysozyme 3.